The sequence spans 179 residues: Large ribosomal subunit protein uL5 (179 aa).

This sequence belongs to the universal ribosomal protein uL5 family. In terms of assembly, part of the 50S ribosomal subunit; part of the 5S rRNA/L5/L18/L25 subcomplex. Contacts the 5S rRNA and the P site tRNA. Forms a bridge to the 30S subunit in the 70S ribosome.

In terms of biological role, this is one of the proteins that bind and probably mediate the attachment of the 5S RNA into the large ribosomal subunit, where it forms part of the central protuberance. In the 70S ribosome it contacts protein S13 of the 30S subunit (bridge B1b), connecting the 2 subunits; this bridge is implicated in subunit movement. Contacts the P site tRNA; the 5S rRNA and some of its associated proteins might help stabilize positioning of ribosome-bound tRNAs. In Yersinia pestis, this protein is Large ribosomal subunit protein uL5.